A 78-amino-acid polypeptide reads, in one-letter code: Acyl carrier protein (78 aa).

In terms of domain architecture, Carrier spans methionine 1–valine 76. Serine 36 bears the O-(pantetheine 4'-phosphoryl)serine mark.

It belongs to the acyl carrier protein (ACP) family. In terms of processing, 4'-phosphopantetheine is transferred from CoA to a specific serine of apo-ACP by AcpS. This modification is essential for activity because fatty acids are bound in thioester linkage to the sulfhydryl of the prosthetic group.

The protein localises to the cytoplasm. It participates in lipid metabolism; fatty acid biosynthesis. Carrier of the growing fatty acid chain in fatty acid biosynthesis. The protein is Acyl carrier protein of Aquifex aeolicus (strain VF5).